A 224-amino-acid polypeptide reads, in one-letter code: Large ribosomal subunit protein uL1 (224 aa).

The protein belongs to the universal ribosomal protein uL1 family. In terms of assembly, part of the 50S ribosomal subunit.

In terms of biological role, binds directly to 23S rRNA. The L1 stalk is quite mobile in the ribosome, and is involved in E site tRNA release. Protein L1 is also a translational repressor protein, it controls the translation of the L11 operon by binding to its mRNA. The polypeptide is Large ribosomal subunit protein uL1 (Borrelia recurrentis (strain A1)).